Consider the following 44-residue polypeptide: Brevinin-1PLa (44 aa).

Residues 1–18 constitute a propeptide that is removed on maturation; the sequence is NAEEERRDEPDETDVEVE. An intrachain disulfide couples Cys38 to Cys44.

Expressed by the skin glands.

It is found in the secreted. Its function is as follows. Antimicrobial peptide. This Lithobates palustris (Pickerel frog) protein is Brevinin-1PLa.